A 307-amino-acid polypeptide reads, in one-letter code: ATP-dependent (S)-NAD(P)H-hydrate dehydratase (307 aa).

The YjeF C-terminal domain occupies 1–291 (MDHFIKLLPK…DEIPKLVRDV (291 aa)). Residues G96 and 150–156 (NIVEFSR) each bind (6S)-NADPHX. ATP is bound by residues 194-198 (KGEVD) and 214-223 (SSLRRCGGQG). D224 contributes to the (6S)-NADPHX binding site.

It belongs to the NnrD/CARKD family. Mg(2+) serves as cofactor.

It carries out the reaction (6S)-NADHX + ATP = ADP + phosphate + NADH + H(+). The catalysed reaction is (6S)-NADPHX + ATP = ADP + phosphate + NADPH + H(+). Its function is as follows. Catalyzes the dehydration of the S-form of NAD(P)HX at the expense of ATP, which is converted to ADP. Together with NAD(P)HX epimerase, which catalyzes the epimerization of the S- and R-forms, the enzyme allows the repair of both epimers of NAD(P)HX, a damaged form of NAD(P)H that is a result of enzymatic or heat-dependent hydration. The sequence is that of ATP-dependent (S)-NAD(P)H-hydrate dehydratase from Caenorhabditis elegans.